A 590-amino-acid polypeptide reads, in one-letter code: Aspartate--tRNA(Asp/Asn) ligase (590 aa).

Glu-170 lines the L-aspartate pocket. The tract at residues 194–197 (QLFK) is aspartate. Arg-216 provides a ligand contact to L-aspartate. ATP contacts are provided by residues 216–218 (RDE) and Gln-225. His-448 lines the L-aspartate pocket. Residue Glu-482 participates in ATP binding. Residue Arg-489 coordinates L-aspartate. Residue 534–537 (GWDR) participates in ATP binding. A disordered region spans residues 557–590 (SGGGADPLTGAPAPITPQQRRESGIDAKPKKDGE). Basic and acidic residues predominate over residues 575–590 (QRRESGIDAKPKKDGE).

It belongs to the class-II aminoacyl-tRNA synthetase family. Type 1 subfamily. As to quaternary structure, homodimer.

Its subcellular location is the cytoplasm. It catalyses the reaction tRNA(Asx) + L-aspartate + ATP = L-aspartyl-tRNA(Asx) + AMP + diphosphate. In terms of biological role, aspartyl-tRNA synthetase with relaxed tRNA specificity since it is able to aspartylate not only its cognate tRNA(Asp) but also tRNA(Asn). Reaction proceeds in two steps: L-aspartate is first activated by ATP to form Asp-AMP and then transferred to the acceptor end of tRNA(Asp/Asn). In Mycobacterium sp. (strain JLS), this protein is Aspartate--tRNA(Asp/Asn) ligase.